The chain runs to 123 residues: Large ribosomal subunit protein uL14 (123 aa).

This sequence belongs to the universal ribosomal protein uL14 family. In terms of assembly, part of the 50S ribosomal subunit. Forms a cluster with proteins L3 and L19. In the 70S ribosome, L14 and L19 interact and together make contacts with the 16S rRNA in bridges B5 and B8.

Its function is as follows. Binds to 23S rRNA. Forms part of two intersubunit bridges in the 70S ribosome. The protein is Large ribosomal subunit protein uL14 of Pectobacterium atrosepticum (strain SCRI 1043 / ATCC BAA-672) (Erwinia carotovora subsp. atroseptica).